Here is a 192-residue protein sequence, read N- to C-terminus: Probable nicotinate-nucleotide adenylyltransferase (192 aa).

It belongs to the NadD family.

The catalysed reaction is nicotinate beta-D-ribonucleotide + ATP + H(+) = deamido-NAD(+) + diphosphate. It participates in cofactor biosynthesis; NAD(+) biosynthesis; deamido-NAD(+) from nicotinate D-ribonucleotide: step 1/1. In terms of biological role, catalyzes the reversible adenylation of nicotinate mononucleotide (NaMN) to nicotinic acid adenine dinucleotide (NaAD). This is Probable nicotinate-nucleotide adenylyltransferase from Bradyrhizobium sp. (strain BTAi1 / ATCC BAA-1182).